The following is a 345-amino-acid chain: Phenylalanine--tRNA ligase alpha subunit (345 aa).

Glu255 serves as a coordination point for Mg(2+).

This sequence belongs to the class-II aminoacyl-tRNA synthetase family. Phe-tRNA synthetase alpha subunit type 1 subfamily. As to quaternary structure, tetramer of two alpha and two beta subunits. Mg(2+) serves as cofactor.

The protein resides in the cytoplasm. It catalyses the reaction tRNA(Phe) + L-phenylalanine + ATP = L-phenylalanyl-tRNA(Phe) + AMP + diphosphate + H(+). The chain is Phenylalanine--tRNA ligase alpha subunit from Lysinibacillus sphaericus (strain C3-41).